Consider the following 311-residue polypeptide: Malate dehydrogenase (311 aa).

NAD(+) contacts are provided by residues 7 to 13 and aspartate 34; that span reads GAAGGIG. Substrate contacts are provided by arginine 81 and arginine 87. Residues asparagine 94 and 117-119 contribute to the NAD(+) site; that span reads ITN. Residues asparagine 119 and arginine 153 each coordinate substrate. Histidine 177 (proton acceptor) is an active-site residue. Methionine 227 lines the NAD(+) pocket.

Belongs to the LDH/MDH superfamily. MDH type 1 family. As to quaternary structure, homodimer.

It catalyses the reaction (S)-malate + NAD(+) = oxaloacetate + NADH + H(+). In terms of biological role, catalyzes the reversible oxidation of malate to oxaloacetate. The sequence is that of Malate dehydrogenase from Vibrio parahaemolyticus serotype O3:K6 (strain RIMD 2210633).